The chain runs to 129 residues: Prefoldin subunit 6 (129 aa).

N-acetylalanine is present on Ala-2. An N6-acetyllysine modification is found at Lys-21. Lys-66 carries the post-translational modification N6-acetyllysine; alternate. A Glycyl lysine isopeptide (Lys-Gly) (interchain with G-Cter in SUMO1); alternate cross-link involves residue Lys-66. Lys-66 participates in a covalent cross-link: Glycyl lysine isopeptide (Lys-Gly) (interchain with G-Cter in SUMO2); alternate.

Belongs to the prefoldin subunit beta family. As to quaternary structure, heterohexamer of two PFD-alpha type and four PFD-beta type subunits. Component of the PAQosome complex which is responsible for the biogenesis of several protein complexes and which consists of R2TP complex members RUVBL1, RUVBL2, RPAP3 and PIH1D1, URI complex members PFDN2, PFDN6, PDRG1, UXT and URI1 as well as ASDURF, POLR2E and DNAAF10/WDR92.

Binds specifically to cytosolic chaperonin (c-CPN) and transfers target proteins to it. Binds to nascent polypeptide chain and promotes folding in an environment in which there are many competing pathways for nonnative proteins. This Homo sapiens (Human) protein is Prefoldin subunit 6 (PFDN6).